The primary structure comprises 112 residues: Signal recognition particle 19 kDa protein (112 aa).

Belongs to the SRP19 family. In terms of assembly, part of the signal recognition particle protein translocation system, which is composed of SRP and FtsY. Archaeal SRP consists of a 7S RNA molecule of 300 nucleotides and two protein subunits: SRP54 and SRP19.

It is found in the cytoplasm. Its function is as follows. Involved in targeting and insertion of nascent membrane proteins into the cytoplasmic membrane. Binds directly to 7S RNA and mediates binding of the 54 kDa subunit of the SRP. This chain is Signal recognition particle 19 kDa protein, found in Aeropyrum pernix (strain ATCC 700893 / DSM 11879 / JCM 9820 / NBRC 100138 / K1).